We begin with the raw amino-acid sequence, 117 residues long: MNKDESRQRRARQTRIRIAEAQANRLTVIRSNSHISAQVYSPCGTKVVAAASTMEKDLRQAIKNGSYAEAAKQIGKLVAERAVKAGVVDVAFDRSGHRYHGRIKALAEAAREAGLKF.

Belongs to the universal ribosomal protein uL18 family. In terms of assembly, part of the 50S ribosomal subunit; part of the 5S rRNA/L5/L18/L25 subcomplex. Contacts the 5S and 23S rRNAs.

This is one of the proteins that bind and probably mediate the attachment of the 5S RNA into the large ribosomal subunit, where it forms part of the central protuberance. The chain is Large ribosomal subunit protein uL18 from Polynucleobacter necessarius subsp. necessarius (strain STIR1).